The primary structure comprises 976 residues: Poly(ADP-ribose) glycohydrolase (976 aa).

M1 is subject to N-acetylmethionine. The segment at 1–69 (MNAGPGCEPC…GRAGQHRGSA (69 aa)) is disordered. An A-domain region spans residues 1-456 (MNAGPGCEPC…LSPDKKWLGT (456 aa)). The Nuclear localization signal signature appears at 10–16 (CTKRPRW). S22 is modified (phosphoserine). Over residues 37–46 (RVLDPKDAHV) the composition is skewed to basic and acidic residues. S68 bears the Phosphoserine mark. Positions 76–83 (QKTITSWM) match the PIP-box (PCNA interacting peptide) motif. 2 positions are modified to phosphoserine: S133 and S137. T139 bears the Phosphothreonine mark. The interval 183 to 350 (SNANIDRSPQ…PSRFQARDAD (168 aa)) is disordered. 2 stretches are compositionally biased toward basic and acidic residues: residues 191–206 (PQNDDHSDTDSEENRD) and 222–233 (TTEDEQAREAKS). At S197 the chain carries Phosphoserine. T199 bears the Phosphothreonine mark. Residues S261, S264, S286, S291, S298, S302, and S316 each carry the phosphoserine modification. Residues 316-331 (SEADEETSPGFDEQED) are compositionally biased toward acidic residues. Positions 332-342 (GSSSQTANKPS) are enriched in polar residues. K340 is modified (N6-acetyllysine). At S448 the chain carries Phosphoserine. The segment at 610-795 (QPIPLLKQKM…TEQYSEYTGY (186 aa)) is catalytic. 726–727 (IE) contributes to the substrate binding site. D737 is an active-site residue. 2 residues coordinate substrate: N740 and Q754. Catalysis depends on residues E755 and E756. Substrate contacts are provided by residues Y795 and 869–874 (NWGCGA).

It belongs to the poly(ADP-ribose) glycohydrolase family. Interacts with PCNA. Interacts with NUDT5. Ubiquitously expressed.

The protein resides in the nucleus. It localises to the cytoplasm. Its subcellular location is the mitochondrion. The protein localises to the mitochondrion matrix. It catalyses the reaction [(1''-&gt;2')-ADP-alpha-D-ribose](n) + H2O = [(1''-&gt;2')-ADP-alpha-D-ribose](n-1) + ADP-D-ribose. Functionally, poly(ADP-ribose) glycohydrolase that degrades poly(ADP-ribose) by hydrolyzing the ribose-ribose bonds present in poly(ADP-ribose). PARG acts both as an endo- and exoglycosidase, releasing poly(ADP-ribose) of different length as well as ADP-ribose monomers. It is however unable to cleave the ester bond between the terminal ADP-ribose and ADP-ribosylated residues, leaving proteins that are mono-ADP-ribosylated. Poly(ADP-ribose) is synthesized after DNA damage is only present transiently and is rapidly degraded by PARG. Required to prevent detrimental accumulation of poly(ADP-ribose) upon prolonged replicative stress, while it is not required for recovery from transient replicative stress. Responsible for the prevalence of mono-ADP-ribosylated proteins in cells, thanks to its ability to degrade poly(ADP-ribose) without cleaving the terminal protein-ribose bond. Required for retinoid acid-dependent gene transactivation, probably by removing poly(ADP-ribose) from histone demethylase KDM4D, allowing chromatin derepression at RAR-dependent gene promoters. Involved in the synthesis of ATP in the nucleus, together with PARP1, NMNAT1 and NUDT5. Nuclear ATP generation is required for extensive chromatin remodeling events that are energy-consuming. The protein is Poly(ADP-ribose) glycohydrolase of Homo sapiens (Human).